A 712-amino-acid chain; its full sequence is Prion-like (glutamine/asparagine-rich) domain bearing protein pqn-59 (712 aa).

Basic and acidic residues-rich tracts occupy residues 79 to 92 (EQKG…KPEE) and 125 to 141 (RESR…KEGA). Disordered stretches follow at residues 79–172 (EQKG…RAVA), 198–217 (TEVQ…TSSA), 228–265 (AAAH…SVAP), 410–517 (SRIM…QQHP), 594–624 (FNKF…ATNY), and 659–712 (AGGR…NWSN). Over residues 156–165 (GRGGRGGARG) the composition is skewed to gly residues. The span at 241-255 (AQNPQPAAPPRRSLS) shows a compositional bias: low complexity. The segment covering 431 to 458 (LKSTSPPLSYGQSNRGLSYDTSSASYQP) has biased composition (polar residues). A compositionally biased stretch (low complexity) spans 474-510 (PTQQSAQQHQPQQQQQQAPQQPVQQQQQTPPAQSQPT). Composition is skewed to polar residues over residues 597 to 612 (FGSQ…QASN) and 683 to 696 (AAQQ…QHNG).

Belongs to the Ubiquitin-associated-like family.

It localises to the cytoplasm. The protein localises to the stress granule. Antagonises the activities of multiple heterochronic microRNAs such as lin-4 and let-7 miRNAs. Modulates gene expression and cell fate specification during development. Plays a role in, but not strictly required for, the formation of stress granules. May be involved in protein translation and reducing the expression of mature microRNAs. In Caenorhabditis elegans, this protein is Prion-like (glutamine/asparagine-rich) domain bearing protein pqn-59.